Here is a 252-residue protein sequence, read N- to C-terminus: Serine/threonine phosphatase stp (252 aa).

Basic and acidic residues predominate over residues 1 to 18 (MHAEFRTDRGRIRHHNED). The interval 1–23 (MHAEFRTDRGRIRHHNEDNGGVF) is disordered. Residues 2 to 242 (HAEFRTDRGR…DNITVLLVER (241 aa)) form the PPM-type phosphatase domain. The Mn(2+) site is built by aspartate 36, glycine 37, aspartate 194, and aspartate 233.

It belongs to the PP2C family. It depends on Mn(2+) as a cofactor.

It is found in the cytoplasm. It localises to the membrane. It catalyses the reaction O-phospho-L-seryl-[protein] + H2O = L-seryl-[protein] + phosphate. The catalysed reaction is O-phospho-L-threonyl-[protein] + H2O = L-threonyl-[protein] + phosphate. Protein phosphatase that dephosphorylates EF-Tu. The protein is Serine/threonine phosphatase stp (stp) of Listeria welshimeri serovar 6b (strain ATCC 35897 / DSM 20650 / CCUG 15529 / CIP 8149 / NCTC 11857 / SLCC 5334 / V8).